The sequence spans 204 residues: LexA repressor (204 aa).

The segment at residues 29–49 (RAEIADIMGFQSKNAASDHLR) is a DNA-binding region (H-T-H motif). Active-site for autocatalytic cleavage activity residues include S123 and K160.

This sequence belongs to the peptidase S24 family. Homodimer.

It carries out the reaction Hydrolysis of Ala-|-Gly bond in repressor LexA.. Its function is as follows. Represses a number of genes involved in the response to DNA damage (SOS response), including recA and lexA. In the presence of single-stranded DNA, RecA interacts with LexA causing an autocatalytic cleavage which disrupts the DNA-binding part of LexA, leading to derepression of the SOS regulon and eventually DNA repair. The protein is LexA repressor of Alcanivorax borkumensis (strain ATCC 700651 / DSM 11573 / NCIMB 13689 / SK2).